Consider the following 505-residue polypeptide: Probable cytochrome P450 28a5 (505 aa).

Cysteine 450 is a binding site for heme.

This sequence belongs to the cytochrome P450 family. Heme is required as a cofactor.

It localises to the endoplasmic reticulum membrane. It is found in the microsome membrane. Functionally, may be involved in the metabolism of insect hormones and in the breakdown of synthetic insecticides. This Drosophila melanogaster (Fruit fly) protein is Probable cytochrome P450 28a5 (Cyp28a5).